The primary structure comprises 105 residues: Small ribosomal subunit protein uS10 (105 aa).

The protein belongs to the universal ribosomal protein uS10 family. As to quaternary structure, part of the 30S ribosomal subunit.

In terms of biological role, involved in the binding of tRNA to the ribosomes. This Synechococcus sp. (strain JA-3-3Ab) (Cyanobacteria bacterium Yellowstone A-Prime) protein is Small ribosomal subunit protein uS10.